We begin with the raw amino-acid sequence, 1107 residues long: DNA polymerase delta catalytic subunit (1107 aa).

The segment at 1 to 34 (MDGKRRPGPGPGVPPKRARGGLWDDDDAPRPSQF) is disordered. Residues 4–19 (KRRPGPGPGVPPKRAR) carry the Nuclear localization signal motif. Residue arginine 19 is modified to Omega-N-methylarginine. Lysine 574 is covalently cross-linked (Glycyl lysine isopeptide (Lys-Gly) (interchain with G-Cter in SUMO2)). Residues cysteine 1012, cysteine 1015, cysteine 1026, and cysteine 1029 each coordinate Zn(2+). The CysA-type zinc-finger motif lies at 1012 to 1029 (CIGCRTVLSHQGAVCEFC). Residues cysteine 1058, cysteine 1061, cysteine 1071, and cysteine 1076 each coordinate [4Fe-4S] cluster. The CysB motif motif lies at 1058–1076 (CQRCQGSLHEDVICTSRDC).

This sequence belongs to the DNA polymerase type-B family. Component of the tetrameric DNA polymerase delta complex (Pol-delta4), which consists of POLD1/p125, POLD2/p50, POLD3/p66/p68 and POLD4/p12, with POLD1 bearing both DNA polymerase and 3' to 5' proofreading exonuclease activities. Within Pol-delta4, directly interacts with POLD2 and POLD4. Following genotoxic stress by DNA-damaging agents, such as ultraviolet light and methyl methanesulfonate, or by replication stress induced by treatment with hydroxyurea or aphidicolin, Pol-delta4 is converted into a trimeric form of the complex (Pol-delta3) by POLD4 degradation. Pol-delta3 is the major form at S phase replication sites and DNA damage sites. POLD1 displays different catalytic properties depending upon the complex it is found in. It exhibits higher proofreading activity and fidelity than Pol-delta4, making it particularly well suited to respond to DNA damage. Directly interacts with PCNA, as do POLD3 and POLD4; this interaction stimulates Pol-delta4 polymerase activity. As POLD2 and POLD4, directly interacts with WRNIP1; this interaction stimulates DNA polymerase delta-mediated DNA synthesis, independently of the presence of PCNA. This stimulation may be due predominantly to an increase of initiation frequency and also to increased processivity. Also observed as a dimeric complex with POLD2 (Pol-delta2 complex). Pol-delta2 is relatively insensitive to the PCNA stimulation (2-5-fold) compared to Pol-delta4 that is stimulated by over 50-fold. The DNA polymerase delta complex interacts with POLDIP2; this interaction is probably mediated through direct binding to POLD2. Interacts with CIAO1. Interacts with POLDIP2. Interacts with RFC1. [4Fe-4S] cluster serves as cofactor. Widely expressed, with high levels of expression in heart and lung.

The protein resides in the nucleus. It carries out the reaction DNA(n) + a 2'-deoxyribonucleoside 5'-triphosphate = DNA(n+1) + diphosphate. With respect to regulation, regulated by alteration of quaternary structure. Exhibits burst rates of DNA synthesis are about 5 times faster in the presence of POLD4 (Pol-delta4 complex) than in its absence (Pol-delta3 complex), while the affinity of the enzyme for its DNA and dNTP substrates appears unchanged. The Pol-delta3 complex is more likely to proofread DNA synthesis because it cleaves single-stranded DNA twice as fast and transfers mismatched DNA from the polymerase to the exonuclease sites 9 times faster compared to the Pol-delta3 complex. Pol-delta3 also extends mismatched primers 3 times more slowly in the absence of POLD4. The conversion of Pol-delta4 into Pol-delta3 is induced by genotoxic stress or by replication stress leading POLD4 degradation. Stimulated in the presence of PCNA. This stimulation is further increased in the presence of KCTD13/PDIP1, most probably via direct interaction between KCTD13 and POLD2. In terms of biological role, as the catalytic component of the trimeric (Pol-delta3 complex) and tetrameric DNA polymerase delta complexes (Pol-delta4 complex), plays a crucial role in high fidelity genome replication, including in lagging strand synthesis, and repair. Exhibits both DNA polymerase and 3'- to 5'-exonuclease activities. Requires the presence of accessory proteins POLD2, POLD3 and POLD4 for full activity. Depending upon the absence (Pol-delta3) or the presence of POLD4 (Pol-delta4), displays differences in catalytic activity. Most notably, expresses higher proofreading activity in the context of Pol-delta3 compared with that of Pol-delta4. Although both Pol-delta3 and Pol-delta4 process Okazaki fragments in vitro, Pol-delta3 may be better suited to fulfill this task, exhibiting near-absence of strand displacement activity compared to Pol-delta4 and stalling on encounter with the 5'-blocking oligonucleotides. Pol-delta3 idling process may avoid the formation of a gap, while maintaining a nick that can be readily ligated. Along with DNA polymerase kappa, DNA polymerase delta carries out approximately half of nucleotide excision repair (NER) synthesis following UV irradiation. Under conditions of DNA replication stress, in the presence of POLD3 and POLD4, may catalyze the repair of broken replication forks through break-induced replication (BIR). Involved in the translesion synthesis (TLS) of templates carrying O6-methylguanine, 8oxoG or abasic sites. The protein is DNA polymerase delta catalytic subunit of Homo sapiens (Human).